A 79-amino-acid polypeptide reads, in one-letter code: ATP synthase subunit c (79 aa).

A run of 2 helical transmembrane segments spans residues 11 to 31 and 53 to 73; these read MAAA…IGIL and FFIV…LGLY.

It belongs to the ATPase C chain family. As to quaternary structure, F-type ATPases have 2 components, F(1) - the catalytic core - and F(0) - the membrane proton channel. F(1) has five subunits: alpha(3), beta(3), gamma(1), delta(1), epsilon(1). F(0) has three main subunits: a(1), b(2) and c(10-14). The alpha and beta chains form an alternating ring which encloses part of the gamma chain. F(1) is attached to F(0) by a central stalk formed by the gamma and epsilon chains, while a peripheral stalk is formed by the delta and b chains.

It localises to the cell inner membrane. Functionally, f(1)F(0) ATP synthase produces ATP from ADP in the presence of a proton or sodium gradient. F-type ATPases consist of two structural domains, F(1) containing the extramembraneous catalytic core and F(0) containing the membrane proton channel, linked together by a central stalk and a peripheral stalk. During catalysis, ATP synthesis in the catalytic domain of F(1) is coupled via a rotary mechanism of the central stalk subunits to proton translocation. Its function is as follows. Key component of the F(0) channel; it plays a direct role in translocation across the membrane. A homomeric c-ring of between 10-14 subunits forms the central stalk rotor element with the F(1) delta and epsilon subunits. This chain is ATP synthase subunit c, found in Yersinia enterocolitica serotype O:8 / biotype 1B (strain NCTC 13174 / 8081).